Consider the following 167-residue polypeptide: MEVVDPEDRDPDDMLLIDRIGDAVAGDAGNDSDSQEEQLEHQVLEQQLAHHQAHHPLRRDNRHVAMLLDAPLEPPPMGLFEGARAGGVAHPRPPARSKKRSFFTIVRPTVLRNQRPELCPLFLNASRAIGEVREEQRGEFFAEYLFENMTSENYPNGVGLPHHWGQL.

3 N-linked (GlcNAc...) asparagine glycosylation sites follow: Asn30, Asn124, and Asn148.

The protein belongs to the male-specific scotti family.

In terms of biological role, post-meiotically transcribed gene that has a role in late spermiogenesis; required for actin cone progression during spermatid individualization. The sequence is that of Male-specific protein scotti from Drosophila ananassae (Fruit fly).